We begin with the raw amino-acid sequence, 616 residues long: Adenylosuccinate synthetase 1 (616 aa).

The tract at residues Met1–Tyr27 is disordered. Residues Pro17 to Tyr27 are compositionally biased toward polar residues. GTP-binding positions include Gly87–Lys93 and Gly117–Thr119. Asp88 functions as the Proton acceptor in the catalytic mechanism. Mg(2+) is bound by residues Asp88 and Gly117. Residues Asp88 to Lys91, Asn115 to His118, Thr202, Lys216, Gln328, Thr343, and Lys472 contribute to the IMP site. The Proton donor role is filled by His118. Ala468–Arg474 provides a ligand contact to substrate. GTP contacts are provided by residues Arg474 and Gly603–Gly605.

The protein belongs to the adenylosuccinate synthetase family. Homodimer. Mg(2+) serves as cofactor.

It localises to the cytoplasm. The catalysed reaction is IMP + L-aspartate + GTP = N(6)-(1,2-dicarboxyethyl)-AMP + GDP + phosphate + 2 H(+). It functions in the pathway purine metabolism; AMP biosynthesis via de novo pathway; AMP from IMP: step 1/2. Its function is as follows. Plays an important role in the salvage pathway for purine nucleotide biosynthesis. Catalyzes the first committed step in the biosynthesis of AMP from IMP. This is Adenylosuccinate synthetase 1 from Trypanosoma cruzi (strain CL Brener).